Reading from the N-terminus, the 575-residue chain is Estrogen receptor beta (575 aa).

The segment at 1-160 (MSSSLSPTLQ…GAVVKRDMHF (160 aa)) is modulating. Positions 108-151 (DTKPHTSGRHSSFLSRPKLFGKRPEDGDGDEALDDDDPSSSSSG) are disordered. Residues 134–145 (GDGDEALDDDDP) are compositionally biased toward acidic residues. 2 NR C4-type zinc fingers span residues 161-181 (CVVCHDYASGYHYGVWSCEGC) and 197-221 (CPATNQCTIDKNRRKSCQACRLRKC). A DNA-binding region (nuclear receptor) is located at residues 161-226 (CVVCHDYASG…RLRKCYEMGM (66 aa)). Positions 290–526 (SPEQLVYCIL…DLLLEMLDAN (237 aa)) constitute an NR LBD domain. Positions 537–549 (VCTDPVTPATSPN) are enriched in polar residues. A disordered region spans residues 537-557 (VCTDPVTPATSPNTPLPPQLH).

The protein belongs to the nuclear hormone receptor family. NR3 subfamily. In terms of assembly, binds DNA as a homodimer. Can form a heterodimer with ER-alpha. In terms of tissue distribution, ovary and testis.

The protein localises to the nucleus. Its function is as follows. Binds estrogens with an affinity similar to that of ER-alpha, and activates expression of reporter genes containing estrogen response elements (ERE) in an estrogen-dependent manner. In Ictalurus punctatus (Channel catfish), this protein is Estrogen receptor beta (esr2).